The chain runs to 96 residues: Venom protein 3.1 (96 aa).

An N-terminal signal peptide occupies residues methionine 1 to alanine 25. Residues glutamate 45 to isoleucine 84 are disordered.

This sequence belongs to the non-disulfide-bridged peptide (NDBP) superfamily. As to expression, expressed by the venom gland.

Its subcellular location is the secreted. The polypeptide is Venom protein 3.1 (Lychas mucronatus (Chinese swimming scorpion)).